Here is a 477-residue protein sequence, read N- to C-terminus: Regulator of G-protein signaling 7 (477 aa).

Positions 37–112 (EKNGIPIRTV…DDGTFYRFQT (76 aa)) constitute a DEP domain. A phosphoserine mark is found at Ser-229 and Ser-241. The disordered stretch occupies residues 236–257 (DIRSHSPTHTPTPETKPPTEDE). Phosphothreonine is present on Thr-243. The 62-residue stretch at 255-316 (EDELHRQIKY…LSDDTTFWEL (62 aa)) folds into the G protein gamma domain. Residues 333 to 448 (GMDEALKDPV…IRSSAYQELL (116 aa)) enclose the RGS domain. Ser-434 carries the post-translational modification Phosphoserine.

As to quaternary structure, interacts with GNB5, forming the RGS7-GNB5 complex. Interacts with GPR158; promotes the GTPase activator activity of the RGS7-GNB5 complex in absence of glycine, in contrast GTPase activator activity of the RGS7-GNB5 complex is inhibited in presence of glycine. Interacts with GPR179. Interacts with PKD1; this prevents rapid proteasomal degradation. Interacts with RGS7BP, leading to regulate the subcellular location of the heterodimer formed with GNB5. Interacts (phosphorylated form) with 14-3-3 protein YWHAQ. Interacts with SNAPIN. Interacts with GNAI1. Interacts with GNAO1, GNAI3 and GNAZ. Post-translationally, palmitoylated. Ubiquitinated, leading to rapid proteasomal degradation. In terms of processing, phosphorylation and subsequent interaction with 14-3-3 proteins inhibits GAP activity. As to expression, brain-specific. Predominantly cerebellar granule cells.

The protein resides in the cytoplasm. Its subcellular location is the cytosol. It is found in the cell membrane. It localises to the membrane. GTPase activator component of the RGS7-GNB5 complex that regulates G protein-coupled receptor signaling cascades. The RGS7-GNB5 complex acts as an inhibitor signal transduction by promoting the GTPase activity of G protein alpha subunits, such as GNAO1, thereby driving them into their inactive GDP-bound form. May play a role in synaptic vesicle exocytosis. Glycine-dependent regulation of the RGS7-GNB5 complex by GPR158 affects mood and cognition via its ability to regulate neuronal excitability in L2/L3 pyramidal neurons of the prefrontal cortex. Modulates the activity of potassium channels that are activated by GNAO1 in response to muscarinic acetylcholine receptor M2/CHRM2 signaling. In Rattus norvegicus (Rat), this protein is Regulator of G-protein signaling 7 (Rgs7).